A 447-amino-acid chain; its full sequence is Phosphoglucosamine mutase (447 aa).

The active-site Phosphoserine intermediate is serine 104. Mg(2+) is bound by residues serine 104, aspartate 243, aspartate 245, and aspartate 247. Serine 104 carries the post-translational modification Phosphoserine.

Belongs to the phosphohexose mutase family. The cofactor is Mg(2+). In terms of processing, activated by phosphorylation.

It carries out the reaction alpha-D-glucosamine 1-phosphate = D-glucosamine 6-phosphate. In terms of biological role, catalyzes the conversion of glucosamine-6-phosphate to glucosamine-1-phosphate. This Corynebacterium jeikeium (strain K411) protein is Phosphoglucosamine mutase.